Here is a 296-residue protein sequence, read N- to C-terminus: MARCERLRGAALRDVVGRAQGVLFDCNGVLWNGERAVPGAPELLERLAQAGKATLFVSNNSRRARPELALRFARLGFGGLRSEQLFSSALCAARLLRQRLLGPPDTQGAVFVLGGEGLRAELRAAGLRLAGDPSEDPGAAPRVRAVLVGYDEHFSFAKLSEACAHLRDPDCLLVATDRDPWHPLSDGSRTPGTGSLAAAVETASGRQALVVGKPSPYMFECITEHFSVDPGRTLMVGDRLETDILFGHRCGMTTVLTLTGVSSLEEAQAYLAAGQHDLVPHYYVESIADLMEGLED.

Aspartate 25 functions as the Nucleophile in the catalytic mechanism. Aspartate 25 and asparagine 27 together coordinate Mg(2+). Catalysis depends on asparagine 27, which acts as the Proton donor. Residues serine 58–asparagine 60, histidine 182, and lysine 213 each bind substrate. Aspartate 238 contributes to the Mg(2+) binding site.

The protein belongs to the HAD-like hydrolase superfamily. As to quaternary structure, homodimer. Mg(2+) serves as cofactor. In terms of tissue distribution, detected in brain (at protein level).

It is found in the cytoplasm. The protein localises to the cytosol. The protein resides in the cytoskeleton. Its subcellular location is the cell projection. It localises to the ruffle membrane. It is found in the lamellipodium membrane. The protein localises to the cell membrane. It catalyses the reaction pyridoxal 5'-phosphate + H2O = pyridoxal + phosphate. The enzyme catalyses pyridoxine 5'-phosphate + H2O = pyridoxine + phosphate. It carries out the reaction pyridoxamine + phosphate = pyridoxamine 5'-phosphate + H2O. The catalysed reaction is O-phospho-L-seryl-[protein] + H2O = L-seryl-[protein] + phosphate. Its function is as follows. Functions as a pyridoxal phosphate (PLP) phosphatase, which also catalyzes the dephosphorylation of pyridoxine 5'-phosphate (PNP) and pyridoxamine 5'-phosphate (PMP), with order of substrate preference PLP &gt; PNP &gt; PMP and therefore plays a role in vitamin B6 metabolism. Also functions as a protein serine phosphatase that specifically dephosphorylates 'Ser-3' in proteins of the actin-depolymerizing factor (ADF)/cofilin family like CFL1 and DSTN. Thereby, regulates cofilin-dependent actin cytoskeleton reorganization, being required for normal progress through mitosis and normal cytokinesis. Does not dephosphorylate phosphothreonines in LIMK1. Does not dephosphorylate peptides containing phosphotyrosine. The protein is Chronophin of Bos taurus (Bovine).